Here is a 428-residue protein sequence, read N- to C-terminus: Elongation factor 1-alpha (428 aa).

In terms of domain architecture, tr-type G spans 5–225; that stretch reads KPILNVAFIG…DAFQPPEKPT (221 aa). The G1 stretch occupies residues 14–21; the sequence is GHVDAGKS. 14-21 serves as a coordination point for GTP; it reads GHVDAGKS. Position 21 (Ser21) interacts with Mg(2+). Residues 70–74 form a G2 region; it reads GVTID. The segment at 91–94 is G3; sequence DCPG. Residues 91 to 95 and 149 to 152 contribute to the GTP site; these read DCPGH and NKMD. Positions 149 to 152 are G4; sequence NKMD. Positions 189–191 are G5; the sequence is ASL.

The protein belongs to the TRAFAC class translation factor GTPase superfamily. Classic translation factor GTPase family. EF-Tu/EF-1A subfamily.

The protein resides in the cytoplasm. It carries out the reaction GTP + H2O = GDP + phosphate + H(+). Functionally, GTP hydrolase that promotes the GTP-dependent binding of aminoacyl-tRNA to the A-site of ribosomes during protein biosynthesis. The protein is Elongation factor 1-alpha of Methanococcus maripaludis (strain C5 / ATCC BAA-1333).